We begin with the raw amino-acid sequence, 140 residues long: Histone H2B (140 aa).

The segment covering 1–10 (MPPKAAEKKP) has biased composition (basic and acidic residues). A disordered region spans residues 1–48 (MPPKAAEKKPSTGGKAPAGKAPAEKKEAGKKTAAAATGDKKKRGKTRK). Lysine 8 and lysine 9 each carry N6-acetyllysine; alternate. Glycyl lysine isopeptide (Lys-Gly) (interchain with G-Cter in SUMO); alternate cross-links involve residues lysine 8 and lysine 9. Positions 11 to 21 (STGGKAPAGKA) are enriched in low complexity. At lysine 15 the chain carries N6-acetyllysine. N6-acetyllysine; alternate is present on lysine 25. A Glycyl lysine isopeptide (Lys-Gly) (interchain with G-Cter in SUMO); alternate cross-link involves residue lysine 25. Residue lysine 26 forms a Glycyl lysine isopeptide (Lys-Gly) (interchain with G-Cter in SUMO) linkage. A Glycyl lysine isopeptide (Lys-Gly) (interchain with G-Cter in ubiquitin) cross-link involves residue lysine 134.

Belongs to the histone H2B family. In terms of assembly, the nucleosome is a histone octamer containing two molecules each of H2A, H2B, H3 and H4 assembled in one H3-H4 heterotetramer and two H2A-H2B heterodimers. The octamer wraps approximately 147 bp of DNA. In terms of processing, monoubiquitinated by the ubc2-bre1 complex to form H2BK123ub1. H2BK123ub1 gives a specific tag for epigenetic transcriptional activation and is also prerequisite for H3K4me and H3K79me formation. H2BK123ub1 also modulates the formation of double-strand breaks during meiosis and is a prerequisite for DNA-damage checkpoint activation. Post-translationally, acetylated by gcn5 to form H2BK11ac and H2BK16ac. H2BK16ac can also be formed by esa1. Acetylation of N-terminal lysines and particularly formation of H2BK11acK16ac has a positive effect on transcription. Sumoylation to form H2BK6su or H2BK7su, and probably also H2BK16su or H2BK17su, occurs preferentially near the telomeres and represses gene transcription.

The protein localises to the nucleus. Its subcellular location is the chromosome. Functionally, core component of nucleosome. Nucleosomes wrap and compact DNA into chromatin, limiting DNA accessibility to the cellular machineries which require DNA as a template. Histones thereby play a central role in transcription regulation, DNA repair, DNA replication and chromosomal stability. DNA accessibility is regulated via a complex set of post-translational modifications of histones, also called histone code, and nucleosome remodeling. This chain is Histone H2B (htb1), found in Neosartorya fischeri (strain ATCC 1020 / DSM 3700 / CBS 544.65 / FGSC A1164 / JCM 1740 / NRRL 181 / WB 181) (Aspergillus fischerianus).